The chain runs to 575 residues: uncharacterized protein (575 aa).

The HTH marR-type domain maps to 1–120 (MKLIEHYVAL…YNMWLSEVFG (120 aa)). Residues 26–49 (LTEIADCLFCTERNAKLILHKLEN) constitute a DNA-binding region (H-T-H motif). The tract at residues 176-490 (EPKPHLVHGW…FGFLHLLLSE (315 aa)) is solute-binding region.

It in the C-terminal section; belongs to the bacterial solute-binding protein 5 family.

This is an uncharacterized protein from Bacillus subtilis (strain 168).